The chain runs to 197 residues: 3-isopropylmalate dehydratase small subunit (197 aa).

The protein belongs to the LeuD family. LeuD type 1 subfamily. As to quaternary structure, heterodimer of LeuC and LeuD.

The enzyme catalyses (2R,3S)-3-isopropylmalate = (2S)-2-isopropylmalate. It participates in amino-acid biosynthesis; L-leucine biosynthesis; L-leucine from 3-methyl-2-oxobutanoate: step 2/4. In terms of biological role, catalyzes the isomerization between 2-isopropylmalate and 3-isopropylmalate, via the formation of 2-isopropylmaleate. The protein is 3-isopropylmalate dehydratase small subunit of Acidothermus cellulolyticus (strain ATCC 43068 / DSM 8971 / 11B).